A 205-amino-acid chain; its full sequence is LexA repressor (205 aa).

The segment at residues 29–49 is a DNA-binding region (H-T-H motif); sequence IRDICKATGLRSSSTVYNYLN. Catalysis depends on for autocatalytic cleavage activity residues Ser128 and Lys165.

The protein belongs to the peptidase S24 family. Homodimer.

The catalysed reaction is Hydrolysis of Ala-|-Gly bond in repressor LexA.. Represses a number of genes involved in the response to DNA damage (SOS response), including recA and lexA. In the presence of single-stranded DNA, RecA interacts with LexA causing an autocatalytic cleavage which disrupts the DNA-binding part of LexA, leading to derepression of the SOS regulon and eventually DNA repair. The protein is LexA repressor of Moorella thermoacetica (strain ATCC 39073 / JCM 9320).